The chain runs to 800 residues: DEP domain-containing protein 1A (800 aa).

Positions 24 to 108 (FRAGMPLKKH…DNSQLYRFPS (85 aa)) constitute a DEP domain. Disordered stretches follow at residues 147 to 173 (ETLE…RSRE), 306 to 326 (SQPG…AKNP), and 459 to 485 (INTS…ARAR). The region spanning 281 to 321 (PLLTYQYYELFVNILVMCGYITTPKSQPGKRKNQEEPNCPQ) is the Rho-GAP domain. Residues 459 to 468 (INTSGSSVSS) are compositionally biased toward low complexity.

This chain is DEP domain-containing protein 1A (depdc1a), found in Danio rerio (Zebrafish).